Here is a 468-residue protein sequence, read N- to C-terminus: UDP-N-acetylmuramate--L-alanine ligase (468 aa).

112–118 (GTHGKTT) provides a ligand contact to ATP.

The protein belongs to the MurCDEF family.

It localises to the cytoplasm. It catalyses the reaction UDP-N-acetyl-alpha-D-muramate + L-alanine + ATP = UDP-N-acetyl-alpha-D-muramoyl-L-alanine + ADP + phosphate + H(+). It functions in the pathway cell wall biogenesis; peptidoglycan biosynthesis. Cell wall formation. This chain is UDP-N-acetylmuramate--L-alanine ligase, found in Bordetella pertussis (strain Tohama I / ATCC BAA-589 / NCTC 13251).